Reading from the N-terminus, the 678-residue chain is MVPSTFSRLKAARCLPVVLAALIFAGCGTHTPDQSTAYMQGTAQADSAFYLQQMQQSSDDTRINWQLLAIRALVKEGKTGQAVELFNQLPQELNDSQRREKTLLAAEIKLAQKDFAGAQNLLAKITPADLEQNQQARYWQAKIDASQGRPSIDLLRALIAQEPLLGAKEKQQNIDATWQALSSMTQEQANTLVINADENILQGWLDLQRVWFDNRNDPDMMKAGIADWQKRYPNNPGAKMLPTQLVNVKAFKPASTNKIALLLPLNGQAAVFGRTIQQGFEAAKNIGTQPVAAQVAAAPAADVAEQPQPQTADGVASPAQASVSDLTGDQPAAQPVPVSAPATSTAAVSAPANPSAELKIYDTSSQPLSQILSQVQQDGASIVVGPLLKNNVEELLKSNTPLNVLALNQPENIENRVNICYFALSPEDEARDAARHIRDQGKQAPLVLIPRSALGDRVANAFAQEWQKLGGGTVLQQKFGSTSELRAGVNGGSGIALTGSPITPRATTDSGMTTNNPTLQTTPTDDQFTNNGGRVDAVYIVATPGEIAFIKPMIAMRNGSQSGATLYASSRSAQGTAGPDFRLEMEGLQYSEIPMLAGGNLPLMQQALSAVNNDYSLARMYAMGVDAWSLANHFSQMRQVQGFEINGNTGSLTANPDCVINRKLSWLQYQQGQVVPAS.

The signal sequence occupies residues M1–G26. C27 carries N-palmitoyl cysteine lipidation. Residue C27 is the site of S-diacylglycerol cysteine attachment. 3 stretches are compositionally biased toward low complexity: residues A300–Q310, Q330–A340, and T513–F528. 2 disordered regions span residues A300–A340 and A496–F528.

Belongs to the LpoA family. Interacts with PBP1a.

It localises to the cell outer membrane. Functionally, regulator of peptidoglycan synthesis that is essential for the function of penicillin-binding protein 1A (PBP1a). This chain is Penicillin-binding protein activator LpoA, found in Shigella flexneri serotype 5b (strain 8401).